A 364-amino-acid chain; its full sequence is Methylthioribose-1-phosphate isomerase (364 aa).

The active-site Proton donor is Asp254.

Belongs to the eIF-2B alpha/beta/delta subunits family. MtnA subfamily.

Its subcellular location is the cytoplasm. It localises to the nucleus. It catalyses the reaction 5-(methylsulfanyl)-alpha-D-ribose 1-phosphate = 5-(methylsulfanyl)-D-ribulose 1-phosphate. Its pathway is amino-acid biosynthesis; L-methionine biosynthesis via salvage pathway; L-methionine from S-methyl-5-thio-alpha-D-ribose 1-phosphate: step 1/6. Its function is as follows. Catalyzes the interconversion of methylthioribose-1-phosphate (MTR-1-P) into methylthioribulose-1-phosphate (MTRu-1-P). This is Methylthioribose-1-phosphate isomerase from Drosophila sechellia (Fruit fly).